We begin with the raw amino-acid sequence, 653 residues long: NADH-ubiquinone oxidoreductase chain 5 (653 aa).

Transmembrane regions (helical) follow at residues 1-21 (MYLV…FFGR), 30-50 (LITS…FFEV), 81-103 (LTVS…SIGY), 120-140 (FTFM…FLGV), 177-197 (FLTI…YSTV), 200-220 (LAPY…LIGA), 241-261 (TPVS…YLLM), 274-294 (LILC…IGLF), 301-319 (VIAY…AIGL), 331-351 (NHAF…HSVS), 365-385 (FLPL…AIPF), 403-423 (FYIS…FTTL), 452-472 (IFIN…GYLT), 511-531 (LLPL…SEFF), 610-630 (GVIT…VFLL), and 631-651 (YLNI…STIN).

Belongs to the complex I subunit 5 family.

It localises to the mitochondrion inner membrane. It catalyses the reaction a ubiquinone + NADH + 5 H(+)(in) = a ubiquinol + NAD(+) + 4 H(+)(out). Functionally, core subunit of the mitochondrial membrane respiratory chain NADH dehydrogenase (Complex I) that is believed to belong to the minimal assembly required for catalysis. Complex I functions in the transfer of electrons from NADH to the respiratory chain. The immediate electron acceptor for the enzyme is believed to be ubiquinone. The protein is NADH-ubiquinone oxidoreductase chain 5 (ND5) of Trichophyton rubrum (Athlete's foot fungus).